Here is a 1184-residue protein sequence, read N- to C-terminus: DNA-directed RNA polymerase subunit beta (1184 aa).

Belongs to the RNA polymerase beta chain family. The RNAP catalytic core consists of 2 alpha, 1 beta, 1 beta' and 1 omega subunit. When a sigma factor is associated with the core the holoenzyme is formed, which can initiate transcription.

The enzyme catalyses RNA(n) + a ribonucleoside 5'-triphosphate = RNA(n+1) + diphosphate. Functionally, DNA-dependent RNA polymerase catalyzes the transcription of DNA into RNA using the four ribonucleoside triphosphates as substrates. The sequence is that of DNA-directed RNA polymerase subunit beta from Fusobacterium nucleatum subsp. nucleatum (strain ATCC 25586 / DSM 15643 / BCRC 10681 / CIP 101130 / JCM 8532 / KCTC 2640 / LMG 13131 / VPI 4355).